The chain runs to 220 residues: Glutamine amidotransferase-like class 1 domain-containing protein 1 (220 aa).

Positions 1 to 35 (MASERLPSRPACLLVASGAAEGVSAQSFLHCFTLA) are cleaved as a signal peptide. 2 N-linked (GlcNAc...) asparagine glycosylation sites follow: asparagine 57 and asparagine 201.

This sequence belongs to the peptidase C56 family. In terms of assembly, homotetramer. Component of the FERRY complex composed of five subunits, TBCK, PPP1R21, FERRY3, CRYZL1 and GATD1 with a ratio of 1:2:1:2:4, respectively.

The protein localises to the secreted. It localises to the early endosome. In terms of biological role, component of the FERRY complex (Five-subunit Endosomal Rab5 and RNA/ribosome intermediary). The FERRY complex directly interacts with mRNAs and RAB5A, and functions as a RAB5A effector involved in the localization and the distribution of specific mRNAs most likely by mediating their endosomal transport. The complex recruits mRNAs and ribosomes to early endosomes through direct mRNA-interaction. The chain is Glutamine amidotransferase-like class 1 domain-containing protein 1 from Bos taurus (Bovine).